Reading from the N-terminus, the 393-residue chain is NADH-quinone oxidoreductase subunit D (393 aa).

The protein belongs to the complex I 49 kDa subunit family. As to quaternary structure, NDH-1 is composed of 14 different subunits. Subunits NuoB, C, D, E, F, and G constitute the peripheral sector of the complex.

The protein localises to the cell inner membrane. It catalyses the reaction a quinone + NADH + 5 H(+)(in) = a quinol + NAD(+) + 4 H(+)(out). Functionally, NDH-1 shuttles electrons from NADH, via FMN and iron-sulfur (Fe-S) centers, to quinones in the respiratory chain. The immediate electron acceptor for the enzyme in this species is believed to be ubiquinone. Couples the redox reaction to proton translocation (for every two electrons transferred, four hydrogen ions are translocated across the cytoplasmic membrane), and thus conserves the redox energy in a proton gradient. The sequence is that of NADH-quinone oxidoreductase subunit D from Ehrlichia ruminantium (strain Welgevonden).